We begin with the raw amino-acid sequence, 87 residues long: MKEGIHPNYREVVFQDMSNGFKFITRSTIQTRENIELDGKTYPLAKIEVSSESHSFYTGQQKIMDTAGRVEKFKNKFGARASGKLAK.

Belongs to the bacterial ribosomal protein bL31 family. Type B subfamily. Part of the 50S ribosomal subunit.

The polypeptide is Large ribosomal subunit protein bL31B (Burkholderia ambifaria (strain MC40-6)).